The following is a 132-amino-acid chain: Small ribosomal subunit protein uS8 (132 aa).

The protein belongs to the universal ribosomal protein uS8 family. In terms of assembly, part of the 30S ribosomal subunit. Contacts proteins S5 and S12.

Functionally, one of the primary rRNA binding proteins, it binds directly to 16S rRNA central domain where it helps coordinate assembly of the platform of the 30S subunit. The chain is Small ribosomal subunit protein uS8 from Rickettsia rickettsii (strain Sheila Smith).